The following is an 871-amino-acid chain: Isoleucine--tRNA ligase (871 aa).

The 'HIGH' region signature appears at 57–67 (PYANGNLHMGH). Glu-554 is a binding site for L-isoleucyl-5'-AMP. The 'KMSKS' region motif lies at 595–599 (KMSKS). Residue Lys-598 coordinates ATP.

This sequence belongs to the class-I aminoacyl-tRNA synthetase family. IleS type 1 subfamily. Monomer.

Its subcellular location is the cytoplasm. The catalysed reaction is tRNA(Ile) + L-isoleucine + ATP = L-isoleucyl-tRNA(Ile) + AMP + diphosphate. In terms of biological role, catalyzes the attachment of isoleucine to tRNA(Ile). As IleRS can inadvertently accommodate and process structurally similar amino acids such as valine, to avoid such errors it has two additional distinct tRNA(Ile)-dependent editing activities. One activity is designated as 'pretransfer' editing and involves the hydrolysis of activated Val-AMP. The other activity is designated 'posttransfer' editing and involves deacylation of mischarged Val-tRNA(Ile). The polypeptide is Isoleucine--tRNA ligase (Staphylococcus epidermidis).